A 520-amino-acid chain; its full sequence is Cytochrome P450 4F3 (520 aa).

A helical membrane pass occupies residues 11-31 (LWPMAASPWLLLLLVGASWLL). 2 residues coordinate heme: Glu-328 and Cys-468.

Belongs to the cytochrome P450 family. It depends on heme as a cofactor. As to expression, selectively expressed in blood neutrophils and bone marrow cells. Coexpressed with CYP4F3B in prostate, ileum and trachea. Selectively expressed in liver and kidney. It is also the predominant CYP4F isoform in trachea and tissues of the gastrointestinal tract.

It localises to the endoplasmic reticulum membrane. Its subcellular location is the microsome membrane. It catalyses the reaction an organic molecule + reduced [NADPH--hemoprotein reductase] + O2 = an alcohol + oxidized [NADPH--hemoprotein reductase] + H2O + H(+). The enzyme catalyses leukotriene B4 + reduced [NADPH--hemoprotein reductase] + O2 = 20-hydroxy-leukotriene B4 + oxidized [NADPH--hemoprotein reductase] + H2O + H(+). It carries out the reaction 20-hydroxy-leukotriene B4 + reduced [NADPH--hemoprotein reductase] + O2 = 20-oxo-leukotriene B4 + oxidized [NADPH--hemoprotein reductase] + 2 H2O + H(+). The catalysed reaction is 20-oxo-leukotriene B4 + reduced [NADPH--hemoprotein reductase] + O2 = 20-carboxy-leukotriene B4 + oxidized [NADPH--hemoprotein reductase] + H2O + 2 H(+). It catalyses the reaction (5Z,8Z,11Z)-eicosatrienoate + reduced [NADPH--hemoprotein reductase] + O2 = 20-hydroxy-(5Z,8Z,11Z)-eicosatrienoate + oxidized [NADPH--hemoprotein reductase] + H2O + H(+). The enzyme catalyses (5Z,8Z,11Z,14Z)-eicosatetraenoate + reduced [NADPH--hemoprotein reductase] + O2 = 20-hydroxy-(5Z,8Z,11Z,14Z)-eicosatetraenoate + oxidized [NADPH--hemoprotein reductase] + H2O + H(+). It carries out the reaction (5Z,8Z,11Z,14Z,17Z)-eicosapentaenoate + reduced [NADPH--hemoprotein reductase] + O2 = 19-hydroxy-(5Z,8Z,11Z,14Z,17Z)-eicosapentaenoate + oxidized [NADPH--hemoprotein reductase] + H2O + H(+). The catalysed reaction is (5Z,8Z,11Z,14Z,17Z)-eicosapentaenoate + reduced [NADPH--hemoprotein reductase] + O2 = 20-hydroxy-(5Z,8Z,11Z,14Z,17Z)-eicosapentaenoate + oxidized [NADPH--hemoprotein reductase] + H2O + H(+). It catalyses the reaction (4Z,7Z,10Z,13Z,16Z,19Z)-docosahexaenoate + reduced [NADPH--hemoprotein reductase] + O2 = 21-hydroxy-(4Z,7Z,10Z,13Z,16Z,19Z)-docosahexaenoate + oxidized [NADPH--hemoprotein reductase] + H2O + H(+). The enzyme catalyses (4Z,7Z,10Z,13Z,16Z,19Z)-docosahexaenoate + reduced [NADPH--hemoprotein reductase] + O2 = 22-hydroxy-(4Z,7Z,10Z,13Z,16Z,19Z)-docosahexaenoate + oxidized [NADPH--hemoprotein reductase] + H2O + H(+). It carries out the reaction 8,9-epoxy-(5Z,11Z,14Z)-eicosatrienoate + reduced [NADPH--hemoprotein reductase] + O2 = 20-hydroxy-8,9-epoxy-(5Z,11Z,14Z)-eicosatrienoate + oxidized [NADPH--hemoprotein reductase] + H2O + H(+). The catalysed reaction is 11,12-epoxy-(5Z,8Z,14Z)-eicosatrienoate + reduced [NADPH--hemoprotein reductase] + O2 = 20-hydroxy-11,12-epoxy-(5Z,8Z,14Z)-eicosatrienoate + oxidized [NADPH--hemoprotein reductase] + H2O + H(+). It catalyses the reaction 14,15-epoxy-(5Z,8Z,11Z)-eicosatrienoate + reduced [NADPH--hemoprotein reductase] + O2 = 20-hydroxy-14,15-epoxy-(5Z,8Z,11Z)-eicosatrienoate + oxidized [NADPH--hemoprotein reductase] + H2O + H(+). The enzyme catalyses 12,13-epoxy-(9Z)-octadecenoate + reduced [NADPH--hemoprotein reductase] + O2 = 18-hydroxy-12,13-epoxy-(9Z)-octadecenoate + oxidized [NADPH--hemoprotein reductase] + H2O + H(+). It carries out the reaction 9,10-epoxy-(12Z)-octadecenoate + reduced [NADPH--hemoprotein reductase] + O2 = 18-hydroxy-9,10-epoxy-(12Z)-octadecenoate + oxidized [NADPH--hemoprotein reductase] + H2O + H(+). The catalysed reaction is 9,10-epoxyoctadecanoate + reduced [NADPH--hemoprotein reductase] + O2 = 18-hydroxy-9,10-epoxy-octadecanoate + oxidized [NADPH--hemoprotein reductase] + H2O + H(+). It catalyses the reaction (12R)-hydroxy-(9Z)-octadecenoate + reduced [NADPH--hemoprotein reductase] + O2 = (12R),18-dihydroxy-(9Z)-octadecenoate + oxidized [NADPH--hemoprotein reductase] + H2O + H(+). The enzyme catalyses 12-hydroxyoctadecanoate + reduced [NADPH--hemoprotein reductase] + O2 = 12,18-dihydroxyoctadecanoate + oxidized [NADPH--hemoprotein reductase] + H2O + H(+). It carries out the reaction 5-hydroxy-(6E,8Z,11Z,14Z)-eicosatetraenoate + reduced [NADPH--hemoprotein reductase] + O2 = 5,20-dihydroxy-(6E,8Z,11Z,14Z)-eicosatetraenoate + oxidized [NADPH--hemoprotein reductase] + H2O + H(+). The catalysed reaction is 8-hydroxy-(5Z,9E,11Z,14Z)-eicosatetraenoate + reduced [NADPH--hemoprotein reductase] + O2 = 8,20-dihydroxy-(5Z,9E,11Z,14Z)-eicosatetraenoate + oxidized [NADPH--hemoprotein reductase] + H2O + H(+). It catalyses the reaction 12-hydroxy-(5Z,8Z,10E,14Z)-eicosatetraenoate + reduced [NADPH--hemoprotein reductase] + O2 = 12,20-dihydroxy-(5Z,8Z,10E,14Z)-eicosatetraenoate + oxidized [NADPH--hemoprotein reductase] + H2O + H(+). The enzyme catalyses 5-hydroxy-(6E,8Z,11Z,14Z,17Z)-eicosapentaenoate + reduced [NADPH--hemoprotein reductase] + O2 = 5,20-dihydroxy-(6E,8Z,11Z,14Z,17Z)-eicosapentaenoate + oxidized [NADPH--hemoprotein reductase] + H2O + H(+). It carries out the reaction lipoxin A4 + reduced [NADPH--hemoprotein reductase] + O2 = 20-hydroxy-lipoxin A4 + oxidized [NADPH--hemoprotein reductase] + H2O + H(+). The catalysed reaction is lipoxin B4 + reduced [NADPH--hemoprotein reductase] + O2 = 20-hydroxy-lipoxin B4 + oxidized [NADPH--hemoprotein reductase] + H2O + H(+). It catalyses the reaction 22-hydroxydocosanoate + reduced [NADPH--hemoprotein reductase] + O2 = 22-oxodocosanoate + oxidized [NADPH--hemoprotein reductase] + 2 H2O + H(+). The enzyme catalyses 22-oxodocosanoate + reduced [NADPH--hemoprotein reductase] + O2 = docosanedioate + oxidized [NADPH--hemoprotein reductase] + H2O + 2 H(+). It carries out the reaction docosanoate + reduced [NADPH--hemoprotein reductase] + O2 = 22-hydroxydocosanoate + oxidized [NADPH--hemoprotein reductase] + H2O + H(+). The catalysed reaction is tetracosanoate + reduced [NADPH--hemoprotein reductase] + O2 = 24-hydroxytetracosanoate + oxidized [NADPH--hemoprotein reductase] + H2O + H(+). It catalyses the reaction hexacosanoate + reduced [NADPH--hemoprotein reductase] + O2 = 26-hydroxyhexacosanoate + oxidized [NADPH--hemoprotein reductase] + H2O + H(+). The enzyme catalyses 26-hydroxyhexacosanoate + reduced [NADPH--hemoprotein reductase] + O2 = 26-oxohexacosanoate + oxidized [NADPH--hemoprotein reductase] + 2 H2O + H(+). It carries out the reaction 26-oxohexacosanoate + reduced [NADPH--hemoprotein reductase] + O2 = hexacosanedioate + oxidized [NADPH--hemoprotein reductase] + H2O + 2 H(+). The catalysed reaction is 3-hydroxyoctadecanoate + reduced [NADPH--hemoprotein reductase] + O2 = 3,18-dihydroxyoctadecanoate + oxidized [NADPH--hemoprotein reductase] + H2O + H(+). It catalyses the reaction 3-hydroxyhexadecanoate + reduced [NADPH--hemoprotein reductase] + O2 = 3,16-dihydroxyhexadecanoate + oxidized [NADPH--hemoprotein reductase] + H2O + H(+). The protein operates within lipid metabolism; leukotriene B4 degradation. Its pathway is lipid metabolism; arachidonate metabolism. With respect to regulation, inhibited by carbon monoxide (CO). Functionally, a cytochrome P450 monooxygenase involved in the metabolism of various endogenous substrates, including fatty acids and their oxygenated derivatives (oxylipins). Mechanistically, uses molecular oxygen inserting one oxygen atom into a substrate, and reducing the second into a water molecule, with two electrons provided by NADPH via cytochrome P450 reductase (CPR; NADPH-ferrihemoprotein reductase). May play a role in inactivation of pro-inflammatory and anti-inflammatory oxylipins during the resolution of inflammation. Its function is as follows. Catalyzes predominantly the oxidation of the terminal carbon (omega-oxidation) of oxylipins in myeloid cells, displaying higher affinity for arachidonate metabolite leukotriene B4 (LTB4). Inactivates LTB4 via three successive oxidative transformations to 20-hydroxy-LTB4, then to 20-oxo-LTB4 and to 20-carboxy-LTB4. Has omega-hydroxylase activity toward long-chain fatty acid epoxides with preference for 8,9-epoxy-(5Z,11Z,14Z)-eicosatrienoate (EET) and 9,10-epoxyoctadecanoate. Omega-hydroxylates monohydroxy polyunsaturated fatty acids (PUFAs), including hydroxyeicosatetraenoates (HETEs) and hydroxyeicosapentaenoates (HEPEs), to dihydroxy compounds. Contributes to the degradation of saturated very long-chain fatty acids (VLCFAs) such as docosanoic acid, by catalyzing successive omega-oxidations to the corresponding dicarboxylic acid, thereby initiating chain shortening. Has low hydroxylase activity toward PUFAs. Catalyzes predominantly the oxidation of the terminal carbon (omega-oxidation) of polyunsaturated fatty acids (PUFAs). Participates in the conversion of arachidonic acid to 20-hydroxyeicosatetraenoic acid (20-HETE), a signaling molecule acting both as vasoconstrictive and natriuretic with overall effect on arterial blood pressure. Has high omega-hydroxylase activity toward other PUFAs, including eicosatrienoic acid (ETA), eicosapentaenoic acid (EPA) and docosahexaenoic acid (DHA). Can also catalyze the oxidation of the penultimate carbon (omega-1 oxidation) of PUFAs with lower efficiency. Contributes to the degradation of saturated very long-chain fatty acids (VLCFAs) such as docosanoic acid and hexacosanoic acid, by catalyzing successive omega-oxidations to the corresponding dicarboxylic acids, thereby initiating chain shortening. Omega-hydroxylates long-chain 3-hydroxy fatty acids, likely initiating the oxidative conversion to the corresponding 3-hydroxydicarboxylic fatty acids. Has omega-hydroxylase activity toward long-chain fatty acid epoxides with preference for 8,9-epoxy-(5Z,11Z,14Z)-eicosatrienoate (EET) and 9,10-epoxyoctadecanoate. The polypeptide is Cytochrome P450 4F3 (Homo sapiens (Human)).